Consider the following 203-residue polypeptide: Secreted RxLR effector protein RXLR-C28 (203 aa).

The N-terminal stretch at 1-24 (MKAVKLTAAVVVLFMAPYVPITSS) is a signal peptide. N-linked (GlcNAc...) asparagine glycosylation occurs at Asn32. Residues 37–40 (RHLR) carry the RxLR motif. Residue Asn193 is glycosylated (N-linked (GlcNAc...) asparagine).

The protein belongs to the RxLR effector family.

It is found in the secreted. The protein resides in the host cytoplasm. Its function is as follows. Secreted effector that does not suppress pattern-triggered immunity (PTI) in plant host. The protein is Secreted RxLR effector protein RXLR-C28 of Plasmopara halstedii (Downy mildew of sunflower).